The following is a 554-amino-acid chain: Valerianol synthase TPS1E (554 aa).

2 residues coordinate Mg(2+): Asp-307 and Asp-311. Residues 326–330 (VQRWD) carry the DDXXD motif motif. 3 residues coordinate Mg(2+): Asp-452, Ser-456, and Glu-460.

This sequence belongs to the terpene synthase family. The cofactor is Mg(2+).

The catalysed reaction is (2E,6E)-farnesyl diphosphate + H2O = valerianol + diphosphate. It functions in the pathway secondary metabolite biosynthesis; terpenoid biosynthesis. Its function is as follows. Terpene synthase that catalyzes the biosynthesis of the terpene valerianol, which is a volatile compound of floral scent. This chain is Valerianol synthase TPS1E, found in Camellia hiemalis (Camellia).